The sequence spans 571 residues: MQASEKTLNEIKAKLPYVEVKKDKLLSIVYVQKELLINTLKAIKEDFGFKLFLDHSVVDTLEAQNRFEAFYILYNVDTKERIAVKTRTEHSLPSAEKLWFAAKWAERECYDMFGINYEGHEHLVRAFMWDTYNYHPLRKDFPLQGYETVELPSLNETVFGDNLSNTMNYRRTHTYVPTLKDLEYTEKNRIKKKAQVVLNWGPLHPGTHGTMWFLFDLEGERIVQTDVILGQLHRGVEKLAEHEPYQQFLVYTDRMDYISALCSNQAWTVAVERLLGIEDIVPIKAKYIRTMMSELQRINSHLLWLGTYALDLGALTIFLYAFKEREKIMDIIEGITGARLTISYTRIGGVRMDLPEGALEVIESFIKFFPKELKDWEKILSRNRIWVKRNKNVGVLTKEDIYFYGLTGAVARGSGVFYDIRKLEPYDAYGMVEFDVPLGENGDCYDRYLVRIEEMKQSIRIIEQCVQKLKTMSPNEPFMAESQDPKKLRLTLDGIGLKVPVGEIYSSGENPRGELGFYINSKGGLKPYRVKIRPGSFYNLCVYPHLMENRYVADAVTILASLDPVVGEVDR.

The NADH dehydrogenase I subunit C stretch occupies residues methionine 1 to arginine 171. The NADH dehydrogenase I subunit D stretch occupies residues alanine 194 to arginine 571.

This sequence in the N-terminal section; belongs to the complex I 30 kDa subunit family. The protein in the C-terminal section; belongs to the complex I 49 kDa subunit family. NDH-1 is composed of 13 different subunits. Subunits NuoB, CD, E, F, and G constitute the peripheral sector of the complex.

It localises to the cell inner membrane. It catalyses the reaction a quinone + NADH + 5 H(+)(in) = a quinol + NAD(+) + 4 H(+)(out). NDH-1 shuttles electrons from NADH, via FMN and iron-sulfur (Fe-S) centers, to quinones in the respiratory chain. The immediate electron acceptor for the enzyme in this species is believed to be ubiquinone. Couples the redox reaction to proton translocation (for every two electrons transferred, four hydrogen ions are translocated across the cytoplasmic membrane), and thus conserves the redox energy in a proton gradient. The polypeptide is NADH-quinone oxidoreductase subunit C/D (nuoC) (Hydrogenobaculum sp. (strain Y04AAS1)).